A 287-amino-acid chain; its full sequence is Elongation factor Ts (287 aa).

Residues 81 to 84 (TDFV) form an involved in Mg(2+) ion dislocation from EF-Tu region.

This sequence belongs to the EF-Ts family.

The protein resides in the cytoplasm. Associates with the EF-Tu.GDP complex and induces the exchange of GDP to GTP. It remains bound to the aminoacyl-tRNA.EF-Tu.GTP complex up to the GTP hydrolysis stage on the ribosome. This chain is Elongation factor Ts, found in Nitratidesulfovibrio vulgaris (strain ATCC 29579 / DSM 644 / CCUG 34227 / NCIMB 8303 / VKM B-1760 / Hildenborough) (Desulfovibrio vulgaris).